Reading from the N-terminus, the 116-residue chain is U16-barytoxin-Tl1c (116 aa).

The first 20 residues, 1-20, serve as a signal peptide directing secretion; sequence MKTIIVFLSLLVLATKFGDA. Positions 21–74 are excised as a propeptide; the sequence is NEGVNQEQMKEVIQNEFREDFLNEMAAMSLLQQLEAIESTLLEKEADRNSRQKR. Disulfide bonds link cysteine 75-cysteine 90, cysteine 82-cysteine 95, and cysteine 89-cysteine 110.

It belongs to the neurotoxin 14 (magi-1) family. 06 (ICK-Trit) subfamily. In terms of tissue distribution, expressed by the venom gland.

It is found in the secreted. In terms of biological role, ion channel inhibitor. In Trittame loki (Brush-footed trapdoor spider), this protein is U16-barytoxin-Tl1c.